The following is a 221-amino-acid chain: Thiol:disulfide interchange protein TlpA (221 aa).

Topologically, residues 1–11 (MLDTKPSATRR) are cytoplasmic. A helical transmembrane segment spans residues 12–35 (IPLVIATVAVGGLAGFAALYGLGL). Topologically, residues 36-221 (SRAPTGDPAC…AATGKAAAAL (186 aa)) are periplasmic. 2 disulfides stabilise this stretch: Cys-45/Cys-190 and Cys-107/Cys-110. Residues 69-215 (ASAPLKLPDL…ALKLIRAATG (147 aa)) enclose the Thioredoxin domain.

Belongs to the thioredoxin family. As to quaternary structure, monomer.

The protein resides in the cell membrane. Involved in cytochrome aa3 assembly. The polypeptide is Thiol:disulfide interchange protein TlpA (tlpA) (Bradyrhizobium diazoefficiens (strain JCM 10833 / BCRC 13528 / IAM 13628 / NBRC 14792 / USDA 110)).